The primary structure comprises 398 residues: Galactose-3-O-sulfotransferase 2 (398 aa).

Over Met1–Arg10 the chain is Cytoplasmic. Residues Tyr11–Leu31 form a helical; Signal-anchor for type II membrane protein membrane-spanning segment. Residues His32–Ala398 are Lumenal-facing. Asn79, Asn132, Asn179, Asn287, Asn330, and Asn360 each carry an N-linked (GlcNAc...) asparagine glycan.

The protein belongs to the galactose-3-O-sulfotransferase family. In terms of tissue distribution, ubiquitous. Detected in heart, stomach, colon, liver and spleen, in epithelial cells lining the lower to middle layer of the crypts in colonic mucosa, hepatocytes surrounding the central vein of the liver, extravillous cytotrophoblasts in the basal plate of the septum of the placenta, renal tubules of the kidney, and neuronal cells of the cerebral cortex.

The protein localises to the golgi apparatus. It is found in the golgi stack membrane. Its pathway is protein modification; carbohydrate sulfation. With respect to regulation, strongly inhibited by Cu(2+) and Zn(2+). Its function is as follows. Transfers a sulfate group to the hydroxyl group at C3 of non-reducing beta-galactosyl residues. Acts both on type 1 (Gal-beta-1,3-GlcNAc) and type 2 (Gal-beta-1,4-GlcNAc) chains with similar efficiency. This is Galactose-3-O-sulfotransferase 2 (GAL3ST2) from Homo sapiens (Human).